Reading from the N-terminus, the 855-residue chain is Envelope glycoprotein gp160 (855 aa).

Positions 1-31 (MTARGTRKNYQRLWRWGTMLLGMLMICSAAE) are cleaved as a signal peptide. The Extracellular portion of the chain corresponds to 32-683 (NLWVTVYYGV…ITNWLWYIRI (652 aa)). Cysteine 53 and cysteine 73 are joined by a disulfide. N-linked (GlcNAc...) asparagine; by host glycosylation is found at asparagine 87, asparagine 134, asparagine 142, asparagine 145, asparagine 161, asparagine 165, asparagine 192, asparagine 202, asparagine 239, asparagine 246, asparagine 267, asparagine 281, asparagine 294, asparagine 300, asparagine 306, asparagine 336, and asparagine 359. Cystine bridges form between cysteine 118/cysteine 210, cysteine 125/cysteine 201, cysteine 130/cysteine 162, cysteine 223/cysteine 252, and cysteine 233/cysteine 244. Residues 130 to 161 (CTDVNTTSSSLRNATNTTSSSWETMEKGELKN) form a V1 region. The interval 162 to 201 (CSFNTTTSIRDKMQEQYALFYKLDVLPIDKNDTKFRLIHC) is V2. The segment at 301–334 (CTRPNNNTRNRISIGPGRAFHTTKQIIGDIRQAH) is V3. Residues cysteine 301 and cysteine 335 are joined by a disulfide bond. The CD4-binding loop stretch occupies residues 367-377 (SSGGDPEIVMH). Disulfide bonds link cysteine 381–cysteine 442 and cysteine 388–cysteine 415. A V4 region spans residues 388-415 (CNTSQLFNSTWNDTTRANSTEVTITLPC). N-linked (GlcNAc...) asparagine; by host glycans are attached at residues asparagine 389, asparagine 395, asparagine 399, asparagine 405, and asparagine 458. V5 regions lie at residues 458 to 469 (NTTNGIEIFRPA) and 460 to 469 (TNGIEIFRPA). Residues 510 to 531 (AVGMLGAMFLGFLGAAGSTMGA) are fusion peptide. Residues 573-591 (KQLQARVLAVERYLKDQQL) are immunosuppression. The cysteines at positions 597 and 603 are disulfide-linked. N-linked (GlcNAc...) asparagine; by host glycans are attached at residues asparagine 610, asparagine 615, asparagine 624, and asparagine 636. Residues 632–666 (REIDNYTHLIYTLIEESQNQQEKNEQELLELDKWA) adopt a coiled-coil conformation. The MPER; binding to GalCer stretch occupies residues 661–682 (ELDKWAGLWSWFSITNWLWYIR). A helical transmembrane segment spans residues 684–704 (FIIIVGGLVGLRIVFAVLSIV). Topologically, residues 705–855 (NRVRQGYSPL…IRQGLERALL (151 aa)) are cytoplasmic. The short motif at 711–714 (YSPL) is the YXXL motif; contains endocytosis signal element. Residues 718-742 (TRLPTQRGPDRPEGIEEEGGERDRD) are disordered. The S-palmitoyl cysteine; by host moiety is linked to residue cysteine 763. Residues 854–855 (LL) carry the Di-leucine internalization motif motif.

This sequence belongs to the HIV-1 env protein family. In terms of assembly, the mature envelope protein (Env) consists of a homotrimer of non-covalently associated gp120-gp41 heterodimers. The resulting complex protrudes from the virus surface as a spike. There seems to be as few as 10 spikes on the average virion. Interacts with host CD4, CCR5 and CXCR4. Gp120 also interacts with the C-type lectins CD209/DC-SIGN and CLEC4M/DC-SIGNR (collectively referred to as DC-SIGN(R)). Gp120 and gp41 interact with GalCer. Gp120 interacts with host ITGA4/ITGB7 complex; on CD4+ T-cells, this interaction results in rapid activation of integrin ITGAL/LFA-1, which facilitates efficient cell-to-cell spreading of HIV-1. Gp120 interacts with cell-associated heparan sulfate; this interaction increases virus infectivity on permissive cells and may be involved in infection of CD4- cells. The mature envelope protein (Env) consists of a homotrimer of non-covalently associated gp120-gp41 heterodimers. The resulting complex protrudes from the virus surface as a spike. There seems to be as few as 10 spikes on the average virion. Highly glycosylated by host. The high number of glycan on the protein is reffered to as 'glycan shield' because it contributes to hide protein sequence from adaptive immune system. Post-translationally, palmitoylation of the transmembrane protein and of Env polyprotein (prior to its proteolytic cleavage) is essential for their association with host cell membrane lipid rafts. Palmitoylation is therefore required for envelope trafficking to classical lipid rafts, but not for viral replication. In terms of processing, specific enzymatic cleavages in vivo yield mature proteins. Envelope glycoproteins are synthesized as an inactive precursor that is heavily N-glycosylated and processed likely by host cell furin in the Golgi to yield the mature SU and TM proteins. The cleavage site between SU and TM requires the minimal sequence [KR]-X-[KR]-R. About 2 of the 9 disulfide bonds of gp41 are reduced by P4HB/PDI, following binding to CD4 receptor.

The protein localises to the virion membrane. It is found in the host cell membrane. Its subcellular location is the host endosome membrane. Oligomerizes in the host endoplasmic reticulum into predominantly trimers. In a second time, gp160 transits in the host Golgi, where glycosylation is completed. The precursor is then proteolytically cleaved in the trans-Golgi and thereby activated by cellular furin or furin-like proteases to produce gp120 and gp41. Its function is as follows. Attaches the virus to the host lymphoid cell by binding to the primary receptor CD4. This interaction induces a structural rearrangement creating a high affinity binding site for a chemokine coreceptor like CXCR4 and/or CCR5. Acts as a ligand for CD209/DC-SIGN and CLEC4M/DC-SIGNR, which are respectively found on dendritic cells (DCs), and on endothelial cells of liver sinusoids and lymph node sinuses. These interactions allow capture of viral particles at mucosal surfaces by these cells and subsequent transmission to permissive cells. HIV subverts the migration properties of dendritic cells to gain access to CD4+ T-cells in lymph nodes. Virus transmission to permissive T-cells occurs either in trans (without DCs infection, through viral capture and transmission), or in cis (following DCs productive infection, through the usual CD4-gp120 interaction), thereby inducing a robust infection. In trans infection, bound virions remain infectious over days and it is proposed that they are not degraded, but protected in non-lysosomal acidic organelles within the DCs close to the cell membrane thus contributing to the viral infectious potential during DCs' migration from the periphery to the lymphoid tissues. On arrival at lymphoid tissues, intact virions recycle back to DCs' cell surface allowing virus transmission to CD4+ T-cells. Functionally, acts as a class I viral fusion protein. Under the current model, the protein has at least 3 conformational states: pre-fusion native state, pre-hairpin intermediate state, and post-fusion hairpin state. During fusion of viral and target intracellular membranes, the coiled coil regions (heptad repeats) assume a trimer-of-hairpins structure, positioning the fusion peptide in close proximity to the C-terminal region of the ectodomain. The formation of this structure appears to drive apposition and subsequent fusion of viral and target cell membranes. Complete fusion occurs in host cell endosomes and is dynamin-dependent, however some lipid transfer might occur at the plasma membrane. The virus undergoes clathrin-dependent internalization long before endosomal fusion, thus minimizing the surface exposure of conserved viral epitopes during fusion and reducing the efficacy of inhibitors targeting these epitopes. Membranes fusion leads to delivery of the nucleocapsid into the cytoplasm. In Homo sapiens (Human), this protein is Envelope glycoprotein gp160.